Consider the following 524-residue polypeptide: Bifunctional purine biosynthesis protein PurH (524 aa).

The 154-residue stretch at 1-154 (MTRLALLSTS…KNHAHVTVLC (154 aa)) folds into the MGS-like domain.

It belongs to the PurH family.

The catalysed reaction is (6R)-10-formyltetrahydrofolate + 5-amino-1-(5-phospho-beta-D-ribosyl)imidazole-4-carboxamide = 5-formamido-1-(5-phospho-D-ribosyl)imidazole-4-carboxamide + (6S)-5,6,7,8-tetrahydrofolate. It catalyses the reaction IMP + H2O = 5-formamido-1-(5-phospho-D-ribosyl)imidazole-4-carboxamide. The protein operates within purine metabolism; IMP biosynthesis via de novo pathway; 5-formamido-1-(5-phospho-D-ribosyl)imidazole-4-carboxamide from 5-amino-1-(5-phospho-D-ribosyl)imidazole-4-carboxamide (10-formyl THF route): step 1/1. Its pathway is purine metabolism; IMP biosynthesis via de novo pathway; IMP from 5-formamido-1-(5-phospho-D-ribosyl)imidazole-4-carboxamide: step 1/1. In Acaryochloris marina (strain MBIC 11017), this protein is Bifunctional purine biosynthesis protein PurH.